We begin with the raw amino-acid sequence, 288 residues long: Diaminopimelate epimerase (288 aa).

3 residues coordinate substrate: Asn13, Gln51, and Asn71. Cys80 serves as the catalytic Proton donor. Substrate is bound by residues 81 to 82 (GN), Asn166, Asn200, and 218 to 219 (ER). Cys227 acts as the Proton acceptor in catalysis. Position 228-229 (228-229 (GT)) interacts with substrate.

This sequence belongs to the diaminopimelate epimerase family. In terms of assembly, homodimer.

It localises to the cytoplasm. The enzyme catalyses (2S,6S)-2,6-diaminopimelate = meso-2,6-diaminopimelate. Its pathway is amino-acid biosynthesis; L-lysine biosynthesis via DAP pathway; DL-2,6-diaminopimelate from LL-2,6-diaminopimelate: step 1/1. Functionally, catalyzes the stereoinversion of LL-2,6-diaminopimelate (L,L-DAP) to meso-diaminopimelate (meso-DAP), a precursor of L-lysine and an essential component of the bacterial peptidoglycan. This Caulobacter vibrioides (strain ATCC 19089 / CIP 103742 / CB 15) (Caulobacter crescentus) protein is Diaminopimelate epimerase.